Consider the following 255-residue polypeptide: Aliphatic sulfonates import ATP-binding protein SsuB (255 aa).

The ABC transporter domain occupies Leu12 to Leu233. ATP is bound at residue Gly44–Ser51.

The protein belongs to the ABC transporter superfamily. Aliphatic sulfonates importer (TC 3.A.1.17.2) family. In terms of assembly, the complex is composed of two ATP-binding proteins (SsuB), two transmembrane proteins (SsuC) and a solute-binding protein (SsuA).

Its subcellular location is the cell inner membrane. It carries out the reaction ATP + H2O + aliphatic sulfonate-[sulfonate-binding protein]Side 1 = ADP + phosphate + aliphatic sulfonateSide 2 + [sulfonate-binding protein]Side 1.. Part of the ABC transporter complex SsuABC involved in aliphatic sulfonates import. Responsible for energy coupling to the transport system. This Escherichia coli (strain K12) protein is Aliphatic sulfonates import ATP-binding protein SsuB.